The sequence spans 983 residues: Inner tegument protein (983 aa).

Residues 474-983 (LNVNTHFAVQ…TSVSLPPASP (510 aa)) form an interaction with large tegument protein region. Positions 902-932 (PWESAPQPPRLRMTPDTDHEESTAGATSVPE) are disordered. The segment covering 914–923 (MTPDTDHEES) has biased composition (basic and acidic residues).

It belongs to the herpesviridae inner tegument protein family. As to quaternary structure, interacts (via C-terminus) with the large tegument protein/LTP (via N-terminus).

The protein localises to the virion tegument. It localises to the host cytoplasm. It is found in the host nucleus. The protein resides in the host Golgi apparatus. Its subcellular location is the host trans-Golgi network. In terms of biological role, plays an essential role in cytoplasmic secondary envelopment during viral egress. Interacts with the capsid via the large tegument protein/LTP and participates in its transport to the host trans-Golgi network (TGN) where secondary envelopment occurs. Modulates tegumentation and capsid accumulation at the viral assembly complex. The chain is Inner tegument protein (UL47) from Homo sapiens (Human).